Consider the following 70-residue polypeptide: Large ribosomal subunit protein bL28 (70 aa).

This sequence belongs to the bacterial ribosomal protein bL28 family.

The sequence is that of Large ribosomal subunit protein bL28 from Thermosipho melanesiensis (strain DSM 12029 / CIP 104789 / BI429).